Consider the following 294-residue polypeptide: N-acetylmuramic acid 6-phosphate etherase (294 aa).

The SIS domain maps to 54-217 (VIASFRKGGR…STTSMIGVGK (164 aa)). The active-site Proton donor is E82. Residue E113 is part of the active site.

This sequence belongs to the GCKR-like family. MurNAc-6-P etherase subfamily. Homodimer.

The catalysed reaction is N-acetyl-D-muramate 6-phosphate + H2O = N-acetyl-D-glucosamine 6-phosphate + (R)-lactate. It participates in amino-sugar metabolism; N-acetylmuramate degradation. Specifically catalyzes the cleavage of the D-lactyl ether substituent of MurNAc 6-phosphate, producing GlcNAc 6-phosphate and D-lactate. This chain is N-acetylmuramic acid 6-phosphate etherase, found in Exiguobacterium sp. (strain ATCC BAA-1283 / AT1b).